Consider the following 380-residue polypeptide: Chaperone protein DnaJ (380 aa).

Residues 5–72 form the J domain; it reads DYYDTLGVPK…QKRAAYDQYG (68 aa). A disordered region spans residues 21-47; it reads IKKAYRKLAMKHHPDRNQGDTSKVSED. Basic residues predominate over residues 24-34; sequence AYRKLAMKHHP. Positions 35 to 47 are enriched in basic and acidic residues; sequence DRNQGDTSKVSED. The CR-type zinc finger occupies 139–217; it reads GKEAQIRIPS…CHGVGKTKNN (79 aa). Residues Cys-152, Cys-155, Cys-169, Cys-172, Cys-191, Cys-194, Cys-205, and Cys-208 each coordinate Zn(2+). 4 CXXCXGXG motif repeats span residues 152 to 159, 169 to 176, 191 to 198, and 205 to 212; these read CGICHGTG, CTTCHGHG, CPQCKGSG, and CVACHGVG.

Belongs to the DnaJ family. As to quaternary structure, homodimer. Zn(2+) is required as a cofactor.

It localises to the cytoplasm. Functionally, participates actively in the response to hyperosmotic and heat shock by preventing the aggregation of stress-denatured proteins and by disaggregating proteins, also in an autonomous, DnaK-independent fashion. Unfolded proteins bind initially to DnaJ; upon interaction with the DnaJ-bound protein, DnaK hydrolyzes its bound ATP, resulting in the formation of a stable complex. GrpE releases ADP from DnaK; ATP binding to DnaK triggers the release of the substrate protein, thus completing the reaction cycle. Several rounds of ATP-dependent interactions between DnaJ, DnaK and GrpE are required for fully efficient folding. Also involved, together with DnaK and GrpE, in the DNA replication of plasmids through activation of initiation proteins. This Polaromonas naphthalenivorans (strain CJ2) protein is Chaperone protein DnaJ.